Reading from the N-terminus, the 266-residue chain is MTEVLTEPRSIRIKGRSFLAVVLSPDLPVDNWLERLDDLASRSAGFFLGRPVVLDVAELAISRDELKALIAELSSRNVSIMGLEGARPSMVERGMPPILKGGRPVSDVDVPKVEPESPPAEEKKKTGKATKASGKSDEIGETDSPQAMITAPQARSVVQSLLLREPVRSGQSVIFTEGDVTVIGSVASGAEIIAGGSIHIYGALRGRAMAGSVGNASARIFCRKMEAELLAIDGIYKMAEDMPPELLGKPVQLWLEDDVIKAEKMA.

The interval 98–146 is disordered; the sequence is ILKGGRPVSDVDVPKVEPESPPAEEKKKTGKATKASGKSDEIGETDSPQ. Over residues 109–124 the composition is skewed to basic and acidic residues; sequence DVPKVEPESPPAEEKK.

The protein belongs to the MinC family. Interacts with MinD and FtsZ.

Cell division inhibitor that blocks the formation of polar Z ring septums. Rapidly oscillates between the poles of the cell to destabilize FtsZ filaments that have formed before they mature into polar Z rings. Prevents FtsZ polymerization. The polypeptide is Probable septum site-determining protein MinC (Allorhizobium ampelinum (strain ATCC BAA-846 / DSM 112012 / S4) (Agrobacterium vitis (strain S4))).